A 203-amino-acid chain; its full sequence is Non-specific lipid transfer protein GPI-anchored 20 (203 aa).

The first 21 residues, 1-21 (MSKIISLVVAMIAVLALPIRG), serve as a signal peptide directing secretion. Disulfide bonds link C29-C74, C40-C58, C59-C99, and C72-C108. N-linked (GlcNAc...) asparagine glycosylation is found at N46, N50, and N88. Residues 119–182 (GPAATFGPSM…TSRPSETPSS (64 aa)) are disordered. Composition is skewed to polar residues over residues 144-156 (AAQTPQSDTTRPF) and 169-179 (DGGSTSRPSET). S172 carries GPI-anchor amidated serine lipidation. Positions 173 to 203 (TSRPSETPSSAYALSPSLLFFSIALVALKFY) are cleaved as a propeptide — removed in mature form.

The protein belongs to the plant LTP family. As to expression, expressed in seedlings, preferentially in hypocotyls and roots. Also observed in siliques and sepals.

The protein resides in the cell membrane. Probable lipid transfer protein. This Arabidopsis thaliana (Mouse-ear cress) protein is Non-specific lipid transfer protein GPI-anchored 20.